The following is a 284-amino-acid chain: Adenylate kinase 1, chloroplastic (284 aa).

A chloroplast-targeting transit peptide spans 1 to 36 (MARLVRVARSSSLFGFGNRFYSTSAEASHASSPSPF). 61 to 66 (GVGKGT) is a binding site for ATP. Residues 81-110 (ATGDLVREELASSGPLSQKLSEIVNQGKLV) are NMP. AMP-binding positions include T82, R87, 108-110 (KLV), 138-141 (GFPR), and Q145. Residues 174–222 (GRRTCSQCGKGFNVAHINLKGENGRPGISMDPLLPPHQCMSKLVTRADD) form an LID region. R175 serves as a coordination point for ATP. AMP-binding residues include R219 and R230. An ATP-binding site is contributed by G258.

This sequence belongs to the adenylate kinase family. As to quaternary structure, monomer. In terms of tissue distribution, highly expressed in flowers and at lower levels in roots, leaves and stems.

It is found in the plastid. The protein resides in the chloroplast stroma. It carries out the reaction AMP + ATP = 2 ADP. Its function is as follows. Catalyzes the reversible transfer of the terminal phosphate group between ATP and AMP. Plays an important role in cellular energy homeostasis, adenine nucleotide metabolism and plant growth. This Arabidopsis thaliana (Mouse-ear cress) protein is Adenylate kinase 1, chloroplastic (ADK).